The sequence spans 647 residues: Threonine--tRNA ligase (647 aa).

The 63-residue stretch at 1–63 (MYMIQLTFPD…EHDGKIELVM (63 aa)) folds into the TGS domain. The segment at 247 to 544 (DHRKLGKELD…LIEEYKGAFP (298 aa)) is catalytic. Zn(2+)-binding residues include Cys-340, His-391, and His-521.

The protein belongs to the class-II aminoacyl-tRNA synthetase family. Homodimer. Zn(2+) serves as cofactor.

The protein resides in the cytoplasm. The catalysed reaction is tRNA(Thr) + L-threonine + ATP = L-threonyl-tRNA(Thr) + AMP + diphosphate + H(+). Functionally, catalyzes the attachment of threonine to tRNA(Thr) in a two-step reaction: L-threonine is first activated by ATP to form Thr-AMP and then transferred to the acceptor end of tRNA(Thr). Also edits incorrectly charged L-seryl-tRNA(Thr). This Exiguobacterium sp. (strain ATCC BAA-1283 / AT1b) protein is Threonine--tRNA ligase.